Here is a 511-residue protein sequence, read N- to C-terminus: Probable G-protein coupled receptor 101 (511 aa).

Residues 1–35 are Extracellular-facing; sequence MPPSCTNSTQENNGSRVCLPLSKMPISVAHGIIRS. Asparagine 7 and asparagine 13 each carry an N-linked (GlcNAc...) asparagine glycan. The helical transmembrane segment at 36 to 56 threads the bilayer; the sequence is VVLLVILGVAFLGNVVLGYVL. Residues 57–67 are Cytoplasmic-facing; it reads HRKPNLLQVTN. The helical transmembrane segment at 68 to 90 threads the bilayer; that stretch reads RFIFNLLVTDLLQVALVAPWVVS. At 91 to 106 the chain is on the extracellular side; the sequence is TAIPFFWPLNIHFCTA. A disulfide bridge connects residues cysteine 104 and cysteine 182. A helical transmembrane segment spans residues 107–127; that stretch reads LVSLTHLFAFASVNTIVVVSV. Residues 128-149 lie on the Cytoplasmic side of the membrane; the sequence is DRYLTIIHPLSYPSKMTNRRSY. The helical transmembrane segment at 150–170 threads the bilayer; that stretch reads ILLYGTWIAAFLQSTPPLYGW. Residues 171–196 are Extracellular-facing; it reads GHATFDDRNAFCSMIWGASPAYTVVS. Residues 197 to 217 form a helical membrane-spanning segment; that stretch reads VVSFLVIPLGVMIACYSVVFG. The Cytoplasmic segment spans residues 218 to 398; sequence AARRQQALLY…PPCYECKAAR (181 aa). Over residues 240-261 the composition is skewed to basic and acidic residues; that stretch reads DSVVHENEEGAKKRDEFQDKNE. Disordered stretches follow at residues 240–315 and 367–386; these read DSVV…EVSN and EAMRIPESSPPSRRNSTSDP. Polar residues predominate over residues 376 to 385; sequence PPSRRNSTSD. A helical transmembrane segment spans residues 399–419; sequence VIFVIISTYVLSLGPYCFLAV. Over 420–432 the chain is Extracellular; that stretch reads LAVWVDIDTRVPQ. The chain crosses the membrane as a helical span at residues 433-453; that stretch reads WVITIIIWLFFLQCCIHPYVY. At 454–511 the chain is on the cytoplasmic side; sequence GYMHKSIKKEIQEVLKKLICKKSPPVEDSHPDLHETEAGTEGGIEGKAVPSHDSATSP. The disordered stretch occupies residues 476-511; sequence SPPVEDSHPDLHETEAGTEGGIEGKAVPSHDSATSP. The segment covering 477–490 has biased composition (basic and acidic residues); that stretch reads PPVEDSHPDLHETE.

This sequence belongs to the G-protein coupled receptor 1 family. Expressed in the brain in hypothalamus.

The protein localises to the cell membrane. Functionally, orphan receptor. This Mus musculus (Mouse) protein is Probable G-protein coupled receptor 101 (Gpr101).